Here is a 360-residue protein sequence, read N- to C-terminus: Photosystem II protein D1 (360 aa).

3 consecutive transmembrane segments (helical) span residues 29–46 (YIGWFGVLMIPCLLTATC), 118–133 (HFLIGVASYMGREWEL), and 142–156 (WICVAFSAPVAAATA). Histidine 118 is a chlorophyll a binding site. Tyrosine 126 provides a ligand contact to pheophytin a. Residues aspartate 170 and glutamate 189 each contribute to the [CaMn4O5] cluster site. A helical transmembrane segment spans residues 197–218 (FHMAGVAGVFGGALFSAMHGSL). Histidine 198 provides a ligand contact to chlorophyll a. Residues histidine 215 and 264–265 (SF) each bind a quinone. Residue histidine 215 participates in Fe cation binding. Histidine 272 is a binding site for Fe cation. A helical membrane pass occupies residues 274 to 288 (FLGAWPVVGIWLTAI). Histidine 332, glutamate 333, aspartate 342, and alanine 344 together coordinate [CaMn4O5] cluster. A propeptide spanning residues 345–360 (SNSVVPVALTAPSVEA) is cleaved from the precursor.

It belongs to the reaction center PufL/M/PsbA/D family. As to quaternary structure, PSII is composed of 1 copy each of membrane proteins PsbA, PsbB, PsbC, PsbD, PsbE, PsbF, PsbH, PsbI, PsbJ, PsbK, PsbL, PsbM, PsbT, PsbX, PsbY, PsbZ, Psb30/Ycf12, at least 3 peripheral proteins of the oxygen-evolving complex and a large number of cofactors. It forms dimeric complexes. The D1/D2 heterodimer binds P680, chlorophylls that are the primary electron donor of PSII, and subsequent electron acceptors. It shares a non-heme iron and each subunit binds pheophytin, quinone, additional chlorophylls, carotenoids and lipids. D1 provides most of the ligands for the Mn4-Ca-O5 cluster of the oxygen-evolving complex (OEC). There is also a Cl(-1) ion associated with D1 and D2, which is required for oxygen evolution. The PSII complex binds additional chlorophylls, carotenoids and specific lipids. serves as cofactor. Post-translationally, tyr-161 forms a radical intermediate that is referred to as redox-active TyrZ, YZ or Y-Z. C-terminally processed by CTPA; processing is essential to allow assembly of the oxygen-evolving complex and thus photosynthetic growth.

Its subcellular location is the plastid. The protein localises to the chloroplast thylakoid membrane. The enzyme catalyses 2 a plastoquinone + 4 hnu + 2 H2O = 2 a plastoquinol + O2. Functionally, photosystem II (PSII) is a light-driven water:plastoquinone oxidoreductase that uses light energy to abstract electrons from H(2)O, generating O(2) and a proton gradient subsequently used for ATP formation. It consists of a core antenna complex that captures photons, and an electron transfer chain that converts photonic excitation into a charge separation. The D1/D2 (PsbA/PsbD) reaction center heterodimer binds P680, the primary electron donor of PSII as well as several subsequent electron acceptors. This Cyanidioschyzon merolae (strain NIES-3377 / 10D) (Unicellular red alga) protein is Photosystem II protein D1.